We begin with the raw amino-acid sequence, 153 residues long: uncharacterized protein (153 aa).

Disordered regions lie at residues 24–87 and 101–153; these read PEDS…DRPL and GDPR…RIPS. The segment covering 27 to 37 has biased composition (low complexity); it reads SSCPCPRLPLS. The segment covering 143–153 has biased composition (basic and acidic residues); sequence TRKESSCRIPS.

This is an uncharacterized protein from Dryophytes versicolor (chameleon treefrog).